A 161-amino-acid polypeptide reads, in one-letter code: Allophycocyanin beta chain (161 aa).

N4-methylasparagine is present on asparagine 71. Position 81 (cysteine 81) interacts with (2R,3E)-phycocyanobilin.

It belongs to the phycobiliprotein family. As to quaternary structure, heterodimer of an alpha and a beta chain. Contains one covalently linked phycocyanobilin chromophore.

It is found in the cellular thylakoid membrane. Light-harvesting photosynthetic bile pigment-protein from the phycobiliprotein complex. Allophycocyanin has a maximum absorption at approximately 650 nanometers. This chain is Allophycocyanin beta chain (apcB), found in Synechocystis sp. (strain ATCC 27184 / PCC 6803 / Kazusa).